The chain runs to 464 residues: MMACRDPKPGAKRLVRAQTLQKQRRAPVGPRAPPPDEEDPRLKCKNCGAFGHMARSTRCPMKCWKAALVPPTLGKKEGKENLKPWKPQVEANPGPLNKDKGEKEERPRQQDPQRKALLHIFSGKPPEKPLPNRKGSTESSVYLRVASGPMPVHTTSKRPRVDPVLADRSATEMSDRGSALASLSPLRKASLSSSSSLGPKERQTGAAADIPQPAVRHQGPEPLLVVKPTHSSPEGGCREVPQAASKTHGLLQAISPQAQDKRPAVTSQPCPPAATHSLGLGSNLSFGPGAKRPAQAPIQACLNFPKKPRLGPFQIPESAIQGGELGAPEYLQPPPATTELGPSTSPQMGRRTPAQVSSVDRQPPHSRPCLPTAQACTMSHHPATSHDGAQPLRVLFRRLENGRWSSSLLAAPSFHSPEKPGAFLAQSPHVSEKSEVPRVRVPPNVLYEDLQVSSSSEDSDSDLE.

4 disordered regions span residues Met-1–Leu-42, Pro-70–Pro-293, Pro-312–Gln-390, and Ala-410–Pro-442. 2 stretches are compositionally biased toward basic and acidic residues: residues Gly-74–Lys-83 and Asn-97–Arg-114. The segment covering Ser-178–Leu-197 has biased composition (low complexity).

The protein belongs to the FAM90 family.

The polypeptide is Protein FAM90A26 (Homo sapiens (Human)).